The following is a 261-amino-acid chain: Small ribosomal subunit protein eS1A (261 aa).

Residues 1–18 show a composition bias toward basic residues; that stretch reads MTLGKNKRISKGGKRGKK. Positions 1–23 are disordered; the sequence is MTLGKNKRISKGGKRGKKKTQET.

Belongs to the eukaryotic ribosomal protein eS1 family. As to quaternary structure, component of the small ribosomal subunit. Mature ribosomes consist of a small (40S) and a large (60S) subunit. The 40S subunit contains about 33 different proteins and 1 molecule of RNA (18S). The 60S subunit contains about 49 different proteins and 3 molecules of RNA (25S, 5.8S and 5S).

The protein resides in the cytoplasm. The polypeptide is Small ribosomal subunit protein eS1A (Trypanosoma cruzi (strain CL Brener)).